The sequence spans 57 residues: Small ribosomal subunit protein bS21 (57 aa).

The disordered stretch occupies residues 24–57 (SKSGTLQESRKREFYEKPSVKRKKKSEAARKRKF). Over residues 31–42 (ESRKREFYEKPS) the composition is skewed to basic and acidic residues. Residues 43 to 57 (VKRKKKSEAARKRKF) show a composition bias toward basic residues.

Belongs to the bacterial ribosomal protein bS21 family.

This Listeria innocua serovar 6a (strain ATCC BAA-680 / CLIP 11262) protein is Small ribosomal subunit protein bS21 (rpsU).